A 1169-amino-acid polypeptide reads, in one-letter code: ATP-dependent helicase/deoxyribonuclease subunit B (1169 aa).

Residues 1-285 (MEIQFLAGRS…TIFERNHRHL (285 aa)) form the UvrD-like helicase ATP-binding domain. 8–15 (GRSGSGKT) is an ATP binding site. In terms of domain architecture, UvrD-like helicase C-terminal spans 280 to 586 (RNHRHLYTPD…KFALIPPSLD (307 aa)). [4Fe-4S] cluster is bound by residues Cys801, Cys1121, Cys1124, and Cys1130.

The protein belongs to the helicase family. AddB/RexB type 1 subfamily. Heterodimer of AddA and AddB. Mg(2+) serves as cofactor. Requires [4Fe-4S] cluster as cofactor.

Functionally, the heterodimer acts as both an ATP-dependent DNA helicase and an ATP-dependent, dual-direction single-stranded exonuclease. Recognizes the chi site generating a DNA molecule suitable for the initiation of homologous recombination. The AddB subunit has 5' -&gt; 3' nuclease activity but not helicase activity. The sequence is that of ATP-dependent helicase/deoxyribonuclease subunit B from Bacillus pumilus (strain SAFR-032).